The sequence spans 379 residues: Cytochrome b (379 aa).

4 helical membrane-spanning segments follow: residues 33 to 53, 77 to 98, 113 to 133, and 178 to 198; these read FGSL…FLAM, WLIR…FIHV, WNIG…GYVL, and FFAF…VHLL. Residues H83 and H97 each contribute to the heme b site. Heme b is bound by residues H182 and H196. H201 lines the a ubiquinone pocket. The next 4 helical transmembrane spans lie at 226–246, 288–308, 320–340, and 347–367; these read TKDL…ALFF, LGGV…PLLN, ITQV…WIGG, and FTMI…ILIP.

It belongs to the cytochrome b family. As to quaternary structure, the cytochrome bc1 complex contains 11 subunits: 3 respiratory subunits (MT-CYB, CYC1 and UQCRFS1), 2 core proteins (UQCRC1 and UQCRC2) and 6 low-molecular weight proteins (UQCRH/QCR6, UQCRB/QCR7, UQCRQ/QCR8, UQCR10/QCR9, UQCR11/QCR10 and a cleavage product of UQCRFS1). This cytochrome bc1 complex then forms a dimer. Heme b is required as a cofactor.

It is found in the mitochondrion inner membrane. Component of the ubiquinol-cytochrome c reductase complex (complex III or cytochrome b-c1 complex) that is part of the mitochondrial respiratory chain. The b-c1 complex mediates electron transfer from ubiquinol to cytochrome c. Contributes to the generation of a proton gradient across the mitochondrial membrane that is then used for ATP synthesis. This Akodon spegazzinii (Spegazzini's grass mouse) protein is Cytochrome b (MT-CYB).